Consider the following 275-residue polypeptide: Undecaprenyl-diphosphatase (275 aa).

A run of 8 helical transmembrane segments spans residues 2–22 (LDIFKAVILGIVEGITEFLPI), 43–63 (FTDMFNVVIQLGAIMAVVVLY), 83–103 (WVLWSKVLLAVIPSVIVGLPL), 111–131 (LMNWAVVSATLIIYGVLFIVI), 147–167 (TLPYTTALFIGCFQLLSLIPG), 186–206 (YVATEFSFFMAIPTMFGASLL), 221–241 (LQGAVLAVGVIVSFVVAYLSI), and 255–275 (AFGWYRIVLGVLVIGYFTLIH).

The protein belongs to the UppP family.

It localises to the cell membrane. It catalyses the reaction di-trans,octa-cis-undecaprenyl diphosphate + H2O = di-trans,octa-cis-undecaprenyl phosphate + phosphate + H(+). Its function is as follows. Catalyzes the dephosphorylation of undecaprenyl diphosphate (UPP). Confers resistance to bacitracin. The polypeptide is Undecaprenyl-diphosphatase (Lactiplantibacillus plantarum (strain ATCC BAA-793 / NCIMB 8826 / WCFS1) (Lactobacillus plantarum)).